Here is a 537-residue protein sequence, read N- to C-terminus: Membrane protein insertase YidC (537 aa).

The next 4 membrane-spanning stretches (helical) occupy residues L5–T25, G353–L373, V418–Y438, and M495–I515.

Belongs to the OXA1/ALB3/YidC family. Type 1 subfamily. As to quaternary structure, interacts with the Sec translocase complex via SecD. Specifically interacts with transmembrane segments of nascent integral membrane proteins during membrane integration.

It localises to the cell inner membrane. In terms of biological role, required for the insertion and/or proper folding and/or complex formation of integral membrane proteins into the membrane. Involved in integration of membrane proteins that insert both dependently and independently of the Sec translocase complex, as well as at least some lipoproteins. Aids folding of multispanning membrane proteins. In Citrifermentans bemidjiense (strain ATCC BAA-1014 / DSM 16622 / JCM 12645 / Bem) (Geobacter bemidjiensis), this protein is Membrane protein insertase YidC.